The chain runs to 125 residues: Large ribosomal subunit protein bL17 (125 aa).

Belongs to the bacterial ribosomal protein bL17 family. Part of the 50S ribosomal subunit. Contacts protein L32.

This is Large ribosomal subunit protein bL17 from Marinomonas sp. (strain MWYL1).